A 75-amino-acid chain; its full sequence is MAPEVLPKPQMRGLLARRLRFHMVTGFVLSLGVAALYKVGVADKRKKAYADFYRNYDAMKDFEEMRKAGIFQSVK.

Over 1 to 13 (MAPEVLPKPQMRG) the chain is Mitochondrial matrix. Residues 14–54 (LLARRLRFHMVTGFVLSLGVAALYKVGVADKRKKAYADFYR) form a helical membrane-spanning segment. Residues 55–75 (NYDAMKDFEEMRKAGIFQSVK) are Mitochondrial intermembrane-facing.

This sequence belongs to the cytochrome c oxidase subunit 6c family. In terms of assembly, component of the cytochrome c oxidase (complex IV, CIV), a multisubunit enzyme composed of 14 subunits. The complex is composed of a catalytic core of 3 subunits MT-CO1, MT-CO2 and MT-CO3, encoded in the mitochondrial DNA, and 11 supernumerary subunits COX4I, COX5A, COX5B, COX6A, COX6B, COX6C, COX7A, COX7B, COX7C, COX8 and NDUFA4, which are encoded in the nuclear genome. The complex exists as a monomer or a dimer and forms supercomplexes (SCs) in the inner mitochondrial membrane with NADH-ubiquinone oxidoreductase (complex I, CI) and ubiquinol-cytochrome c oxidoreductase (cytochrome b-c1 complex, complex III, CIII), resulting in different assemblies (supercomplex SCI(1)III(2)IV(1) and megacomplex MCI(2)III(2)IV(2)).

Its subcellular location is the mitochondrion inner membrane. It participates in energy metabolism; oxidative phosphorylation. In terms of biological role, component of the cytochrome c oxidase, the last enzyme in the mitochondrial electron transport chain which drives oxidative phosphorylation. The respiratory chain contains 3 multisubunit complexes succinate dehydrogenase (complex II, CII), ubiquinol-cytochrome c oxidoreductase (cytochrome b-c1 complex, complex III, CIII) and cytochrome c oxidase (complex IV, CIV), that cooperate to transfer electrons derived from NADH and succinate to molecular oxygen, creating an electrochemical gradient over the inner membrane that drives transmembrane transport and the ATP synthase. Cytochrome c oxidase is the component of the respiratory chain that catalyzes the reduction of oxygen to water. Electrons originating from reduced cytochrome c in the intermembrane space (IMS) are transferred via the dinuclear copper A center (CU(A)) of subunit 2 and heme A of subunit 1 to the active site in subunit 1, a binuclear center (BNC) formed by heme A3 and copper B (CU(B)). The BNC reduces molecular oxygen to 2 water molecules using 4 electrons from cytochrome c in the IMS and 4 protons from the mitochondrial matrix. The polypeptide is Cytochrome c oxidase subunit 6C (COX6C) (Macaca silenus (Lion-tailed macaque)).